The following is a 536-amino-acid chain: Putative UDP-glucuronosyltransferase ugt-47 (536 aa).

An N-terminal signal peptide occupies residues 1–21 (MFRYHSILLLAILYFFEYGLA). 2 N-linked (GlcNAc...) asparagine glycosylation sites follow: Asn-52 and Asn-308. The helical transmembrane segment at 497–517 (IIVPCFFVAFYFIIFPFFKLF) threads the bilayer.

It belongs to the UDP-glycosyltransferase family.

The protein resides in the membrane. The enzyme catalyses glucuronate acceptor + UDP-alpha-D-glucuronate = acceptor beta-D-glucuronoside + UDP + H(+). This chain is Putative UDP-glucuronosyltransferase ugt-47 (ugt-47), found in Caenorhabditis elegans.